A 351-amino-acid polypeptide reads, in one-letter code: Tropomodulin-2 (351 aa).

A Phosphoserine modification is found at Ser-25.

Belongs to the tropomodulin family. In terms of assembly, binds to the N-terminus of tropomyosin and to actin. As to expression, neuronal-tissue specific.

The protein resides in the cytoplasm. It localises to the cytoskeleton. Functionally, blocks the elongation and depolymerization of the actin filaments at the pointed end. The Tmod/TM complex contributes to the formation of the short actin protofilament, which in turn defines the geometry of the membrane skeleton. The polypeptide is Tropomodulin-2 (TMOD2) (Homo sapiens (Human)).